The chain runs to 310 residues: Ribose-phosphate pyrophosphokinase (310 aa).

ATP is bound by residues 34 to 36 (DQE) and 93 to 94 (RQ). 2 residues coordinate Mg(2+): His-127 and Asp-167. Residue Lys-190 is part of the active site. D-ribose 5-phosphate contacts are provided by residues Arg-192, Asp-216, and 220–224 (DSGGT).

Belongs to the ribose-phosphate pyrophosphokinase family. Class I subfamily. In terms of assembly, homohexamer. Mg(2+) serves as cofactor.

Its subcellular location is the cytoplasm. The enzyme catalyses D-ribose 5-phosphate + ATP = 5-phospho-alpha-D-ribose 1-diphosphate + AMP + H(+). The protein operates within metabolic intermediate biosynthesis; 5-phospho-alpha-D-ribose 1-diphosphate biosynthesis; 5-phospho-alpha-D-ribose 1-diphosphate from D-ribose 5-phosphate (route I): step 1/1. Its function is as follows. Involved in the biosynthesis of the central metabolite phospho-alpha-D-ribosyl-1-pyrophosphate (PRPP) via the transfer of pyrophosphoryl group from ATP to 1-hydroxyl of ribose-5-phosphate (Rib-5-P). The polypeptide is Ribose-phosphate pyrophosphokinase (Agrobacterium fabrum (strain C58 / ATCC 33970) (Agrobacterium tumefaciens (strain C58))).